The primary structure comprises 73 residues: UPF0435 protein BH2488 (73 aa).

The protein belongs to the UPF0435 family.

The protein is UPF0435 protein BH2488 of Halalkalibacterium halodurans (strain ATCC BAA-125 / DSM 18197 / FERM 7344 / JCM 9153 / C-125) (Bacillus halodurans).